The following is a 41-amino-acid chain: Large ribosomal subunit protein bL36 (41 aa).

Belongs to the bacterial ribosomal protein bL36 family.

The sequence is that of Large ribosomal subunit protein bL36 from Hyphomonas neptunium (strain ATCC 15444).